We begin with the raw amino-acid sequence, 146 residues long: Phospholipase A2, membrane associated (146 aa).

The N-terminal stretch at 1–21 (MKVLLLLAVVIMAFGSIQVQG) is a signal peptide. Intrachain disulfides connect Cys-47-Cys-139, Cys-49-Cys-65, Cys-64-Cys-119, Cys-70-Cys-146, Cys-71-Cys-112, Cys-80-Cys-105, and Cys-98-Cys-110. His-48, Gly-50, and Gly-52 together coordinate Ca(2+). His-68 is an active-site residue. Asp-69 provides a ligand contact to Ca(2+). The active site involves Asp-113.

The protein belongs to the phospholipase A2 family. Ca(2+) serves as cofactor.

It is found in the secreted. The protein localises to the cell membrane. The protein resides in the mitochondrion outer membrane. It catalyses the reaction a 1,2-diacyl-sn-glycero-3-phosphoethanolamine + H2O = a 1-acyl-sn-glycero-3-phosphoethanolamine + a fatty acid + H(+). It carries out the reaction 1-hexadecanoyl-2-(9Z-octadecenoyl)-sn-glycero-3-phosphoethanolamine + H2O = 1-hexadecanoyl-sn-glycero-3-phosphoethanolamine + (9Z)-octadecenoate + H(+). The catalysed reaction is 1-hexadecanoyl-2-(9Z,12Z-octadecadienoyl)-sn-glycero-3-phosphoethanolamine + H2O = 1-hexadecanoyl-sn-glycero-3-phosphoethanolamine + (9Z,12Z)-octadecadienoate + H(+). The enzyme catalyses 1-hexadecanoyl-2-(5Z,8Z,11Z,14Z-eicosatetraenoyl)-sn-glycero-3-phosphoethanolamine + H2O = 1-hexadecanoyl-sn-glycero-3-phosphoethanolamine + (5Z,8Z,11Z,14Z)-eicosatetraenoate + H(+). It catalyses the reaction N-hexadecanoyl-1,2-di-(9Z-octadecenoyl)-sn-glycero-3-phosphoethanolamine + H2O = N-hexadecanoyl-1-(9Z-octadecenoyl)-sn-glycero-3-phosphoethanolamine + (9Z)-octadecenoate + H(+). It carries out the reaction 1,2-dihexadecanoyl-sn-glycero-3-phospho-(1'-sn-glycerol) + H2O = 1-hexadecanoyl-sn-glycero-3-phospho-(1'-sn-glycerol) + hexadecanoate + H(+). The catalysed reaction is 1-hexadecanoyl-2-(9Z-octadecenoyl)-sn-glycero-3-phosphoglycerol + H2O = 1-hexadecanoyl-sn-glycero-3-phosphoglycerol + (9Z)-octadecenoate + H(+). The enzyme catalyses 1-hexadecanoyl-2-(9Z-octadecenoyl)-sn-glycero-3-phospho-(1'-sn-glycerol) + H2O = 1-hexadecanoyl-sn-glycero-3-phospho-(1'-sn-glycerol) + (9Z)-octadecenoate + H(+). It catalyses the reaction a 1,2-diacyl-sn-glycero-3-phosphocholine + H2O = a 1-acyl-sn-glycero-3-phosphocholine + a fatty acid + H(+). It carries out the reaction 1,2-dihexadecanoyl-sn-glycero-3-phosphocholine + H2O = 1-hexadecanoyl-sn-glycero-3-phosphocholine + hexadecanoate + H(+). The catalysed reaction is 1-hexadecanoyl-2-(9Z-octadecenoyl)-sn-glycero-3-phosphocholine + H2O = 1-hexadecanoyl-sn-glycero-3-phosphocholine + (9Z)-octadecenoate + H(+). The enzyme catalyses 1-hexadecanoyl-2-(9Z,12Z-octadecadienoyl)-sn-glycero-3-phosphocholine + H2O = (9Z,12Z)-octadecadienoate + 1-hexadecanoyl-sn-glycero-3-phosphocholine + H(+). It catalyses the reaction 1-hexadecanoyl-2-(4Z,7Z,10Z,13Z,16Z,19Z-docosahexaenoyl)-sn-glycero-3-phosphocholine + H2O = (4Z,7Z,10Z,13Z,16Z,19Z)-docosahexaenoate + 1-hexadecanoyl-sn-glycero-3-phosphocholine + H(+). Its function is as follows. Secretory calcium-dependent phospholipase A2 that primarily targets extracellular phospholipids with implications in host antimicrobial defense, inflammatory response and tissue regeneration. Hydrolyzes the ester bond of the fatty acyl group attached at sn-2 position of phospholipids (phospholipase A2 activity) with preference for phosphatidylethanolamines and phosphatidylglycerols over phosphatidylcholines. Contributes to lipid remodeling of cellular membranes and generation of lipid mediators involved in pathogen clearance. Displays bactericidal activity against Gram-positive bacteria by directly hydrolyzing phospholipids of the bacterial membrane. Upon sterile inflammation, targets membrane phospholipids of extracellular mitochondria released from activated platelets, generating free unsaturated fatty acids such as arachidonate that is used by neighboring leukocytes to synthesize inflammatory eicosanoids such as leukotrienes. Simultaneously, by compromising mitochondrial membrane integrity, promotes the release in circulation of potent damage-associated molecular pattern molecules that activate the innate immune response. Plays a stem cell regulator role in the intestinal crypt. Within intracellular compartment mediates Paneth cell differentiation and its stem cell supporting functions by inhibiting Wnt signaling pathway in intestinal stem cell (ICS). Secreted in the intestinal lumen upon inflammation, acts in an autocrine way and promotes prostaglandin E2 synthesis that stimulates Wnt signaling pathway in ICS cells and tissue regeneration. May play a role in the biosynthesis of N-acyl ethanolamines that regulate energy metabolism and inflammation. Hydrolyzes N-acyl phosphatidylethanolamines to N-acyl lysophosphatidylethanolamines, which are further cleaved by a lysophospholipase D to release N-acyl ethanolamines. Independent of its catalytic activity, acts as a ligand for integrins. Binds to and activates integrins ITGAV:ITGB3, ITGA4:ITGB1 and ITGA5:ITGB1. Binds to a site (site 2) which is distinct from the classical ligand-binding site (site 1) and induces integrin conformational changes and enhanced ligand binding to site 1. Induces cell proliferation in an integrin-dependent manner. The chain is Phospholipase A2, membrane associated (Pla2g2a) from Rattus norvegicus (Rat).